Reading from the N-terminus, the 95-residue chain is Aspartyl/glutamyl-tRNA(Asn/Gln) amidotransferase subunit C (95 aa).

The protein belongs to the GatC family. In terms of assembly, heterotrimer of A, B and C subunits.

The catalysed reaction is L-glutamyl-tRNA(Gln) + L-glutamine + ATP + H2O = L-glutaminyl-tRNA(Gln) + L-glutamate + ADP + phosphate + H(+). The enzyme catalyses L-aspartyl-tRNA(Asn) + L-glutamine + ATP + H2O = L-asparaginyl-tRNA(Asn) + L-glutamate + ADP + phosphate + 2 H(+). Allows the formation of correctly charged Asn-tRNA(Asn) or Gln-tRNA(Gln) through the transamidation of misacylated Asp-tRNA(Asn) or Glu-tRNA(Gln) in organisms which lack either or both of asparaginyl-tRNA or glutaminyl-tRNA synthetases. The reaction takes place in the presence of glutamine and ATP through an activated phospho-Asp-tRNA(Asn) or phospho-Glu-tRNA(Gln). The polypeptide is Aspartyl/glutamyl-tRNA(Asn/Gln) amidotransferase subunit C (Brucella melitensis biotype 2 (strain ATCC 23457)).